The sequence spans 221 residues: Flagellar L-ring protein 1 (221 aa).

The signal sequence occupies residues 1 to 16; it reads MKRFLILTPMVLALCG. Cys-17 is lipidated: N-palmitoyl cysteine. The S-diacylglycerol cysteine moiety is linked to residue Cys-17.

Belongs to the FlgH family. The basal body constitutes a major portion of the flagellar organelle and consists of four rings (L,P,S, and M) mounted on a central rod.

The protein resides in the cell outer membrane. It localises to the bacterial flagellum basal body. In terms of biological role, assembles around the rod to form the L-ring and probably protects the motor/basal body from shearing forces during rotation. The polypeptide is Flagellar L-ring protein 1 (Yersinia pestis).